Consider the following 318-residue polypeptide: Electron transfer flavoprotein subunit alpha (318 aa).

257–285 (LYIALGISGAIQHRAGMQTSKTIVAVNKD) contributes to the FAD binding site.

It belongs to the ETF alpha-subunit/FixB family. In terms of assembly, heterodimer of an alpha and a beta subunit. FAD serves as cofactor.

Its function is as follows. The electron transfer flavoprotein serves as a specific electron acceptor for other dehydrogenases. It transfers the electrons to the main respiratory chain via ETF-ubiquinone oxidoreductase (ETF dehydrogenase). This Mycobacterium leprae (strain TN) protein is Electron transfer flavoprotein subunit alpha (etfA).